The primary structure comprises 303 residues: MATH domain and coiled-coil domain-containing protein At3g58250 (303 aa).

Residues 8-135 (KKKFSWVIKN…KGELKIVVEI (128 aa)) enclose the MATH domain. A coiled-coil region spans residues 231–287 (KLDWLKKKLDQVTQKKEKEAAGETRMHEIGEELKDLKLKCSDLEAQLDKEKADVLAA).

In Arabidopsis thaliana (Mouse-ear cress), this protein is MATH domain and coiled-coil domain-containing protein At3g58250.